The following is a 411-amino-acid chain: Peptidase T (411 aa).

His-79 serves as a coordination point for Zn(2+). Asp-81 is a catalytic residue. Zn(2+) is bound at residue Asp-142. The Proton acceptor role is filled by Glu-176. Residues Glu-177, Asp-199, and His-381 each contribute to the Zn(2+) site.

The protein belongs to the peptidase M20B family. Zn(2+) is required as a cofactor.

The protein resides in the cytoplasm. The catalysed reaction is Release of the N-terminal residue from a tripeptide.. In terms of biological role, cleaves the N-terminal amino acid of tripeptides. In Geobacillus kaustophilus (strain HTA426), this protein is Peptidase T.